The chain runs to 269 residues: Hydroxyethylthiazole kinase (269 aa).

Methionine 45 contributes to the substrate binding site. ATP is bound by residues arginine 121 and threonine 167. A substrate-binding site is contributed by glycine 194.

The protein belongs to the Thz kinase family. The cofactor is Mg(2+).

The catalysed reaction is 5-(2-hydroxyethyl)-4-methylthiazole + ATP = 4-methyl-5-(2-phosphooxyethyl)-thiazole + ADP + H(+). It functions in the pathway cofactor biosynthesis; thiamine diphosphate biosynthesis; 4-methyl-5-(2-phosphoethyl)-thiazole from 5-(2-hydroxyethyl)-4-methylthiazole: step 1/1. Functionally, catalyzes the phosphorylation of the hydroxyl group of 4-methyl-5-beta-hydroxyethylthiazole (THZ). This is Hydroxyethylthiazole kinase from Bacillus licheniformis (strain ATCC 14580 / DSM 13 / JCM 2505 / CCUG 7422 / NBRC 12200 / NCIMB 9375 / NCTC 10341 / NRRL NRS-1264 / Gibson 46).